Reading from the N-terminus, the 171-residue chain is Calcium channel flower homolog (171 aa).

The Cytoplasmic segment spans residues 1-31 (MSGSGAAGAAAGPAPPAQEEGMTWWYRWLCR). A helical transmembrane segment spans residues 32–52 (LAGVLGAVSCAISGLFNCVTI). Residues 53 to 56 (HPLN) lie on the Extracellular side of the membrane. The chain crosses the membrane as a helical span at residues 57–77 (IAAGVWMIMNAFILLLCEAPF). At 78–101 (CCQFVEFANTVAEKVDRLRSWQKA) the chain is on the cytoplasmic side. The helical transmembrane segment at 102–122 (VFYCGMAIVPIVMSLTLTTLL) threads the bilayer. The Extracellular segment spans residues 123–124 (GN). A helical membrane pass occupies residues 125-141 (AIAFATGVLYGLSALGK). At 142-171 (KGDAISYARIQQQRQQADEEKLAETFEGEL) the chain is on the cytoplasmic side.

It belongs to the calcium channel flower family. Interacts with adaptor protein complex 2 (AP-2). In terms of tissue distribution, expressed in neurons in the brain (at protein level). Expressed in neuroblastoma cell lines (at protein level). Expressed in cytotoxic T-lymphoocytes (at protein level). As to expression, low levels of expression in various tissues including the brain, eye, heart, liver and colon. Expression in the heart is at slightly higher levels than isoform 3. Expressed in skin cells. Very low levels of expression in the brain, liver and eye. Detected at very low levels of expression in skin cells. In terms of tissue distribution, expressed in various tissues, with highest levels of expression in the brain and eye. Expressed in skin cells. Low levels of expression in the liver, colon, heart and spleen. As to expression, barely detected in the brain and liver.

The protein resides in the cell membrane. It localises to the vesicle. Transmembrane protein which mediates synaptic endocytosis and fitness-based cell culling. In response to different stimulus strengths, controls two major modes of synaptic vesicle (SV) retrieval in hippocampal neurons; Clathrin-mediated endocytosis (CME) in response to mild stimulation and activity-dependent bulk endocytosis (ADBE) in response to strong stimulation. In cytotoxic T-lymphoocytes (CTLs) facilitates calcium-dependent endocytosis of cytotoxic granules (CGs) at the immuno synapse. Different isoforms work as fitness fingerprints in 'loser' and 'winner' cells and thereby mediate win/lose decisions as part of the cell competition process. In Mus musculus (Mouse), this protein is Calcium channel flower homolog (Cacfd1).